The sequence spans 473 residues: Ion-translocating oxidoreductase complex subunit C (473 aa).

4Fe-4S ferredoxin-type domains lie at 328-357 (KNES…QQLY) and 368-396 (TKKH…VKYF). The [4Fe-4S] cluster site is built by cysteine 337, cysteine 340, cysteine 343, cysteine 347, cysteine 376, cysteine 379, cysteine 382, and cysteine 386.

This sequence belongs to the 4Fe4S bacterial-type ferredoxin family. RnfC subfamily. As to quaternary structure, the complex is composed of six subunits: RnfA, RnfB, RnfC, RnfD, RnfE and RnfG. The cofactor is [4Fe-4S] cluster.

The protein localises to the cell inner membrane. In terms of biological role, part of a membrane-bound complex that couples electron transfer with translocation of ions across the membrane. The polypeptide is Ion-translocating oxidoreductase complex subunit C (Buchnera aphidicola subsp. Acyrthosiphon pisum (strain APS) (Acyrthosiphon pisum symbiotic bacterium)).